Here is a 141-residue protein sequence, read N- to C-terminus: MAKKVVGFIKLQIPAGAANPAPPVGPALGQKGVNIMEFCKQFNAKTQSQSGTIIPVVITVYSDKSFTFITKTPPAAVLLVKEAGLQKGSGEPNKNKVGKVTEEQVRKIAELKMPDLNAFDIDGAMQMIRGTARSMGIVVEG.

The protein belongs to the universal ribosomal protein uL11 family. In terms of assembly, part of the ribosomal stalk of the 50S ribosomal subunit. Interacts with L10 and the large rRNA to form the base of the stalk. L10 forms an elongated spine to which L12 dimers bind in a sequential fashion forming a multimeric L10(L12)X complex. One or more lysine residues are methylated.

Its function is as follows. Forms part of the ribosomal stalk which helps the ribosome interact with GTP-bound translation factors. This chain is Large ribosomal subunit protein uL11, found in Chlorobium phaeobacteroides (strain BS1).